We begin with the raw amino-acid sequence, 396 residues long: Glideosome-associated protein 50 (396 aa).

Residues 1–369 (MNYCKTTFHI…PMGNKDTFVR (369 aa)) lie on the Lumenal side of the membrane. Residues histidine 195 and histidine 256 each contribute to the a metal cation site. Residues 370 to 390 (VVGTIGILIGSVIVFIGASSF) form a helical membrane-spanning segment. Topologically, residues 391-396 (LSKNMK) are cytoplasmic.

It belongs to the metallophosphoesterase superfamily. Purple acid phosphatase family. As to quaternary structure, component of the glideosome complex composed of GAP50, GAP45, MTIP and MyoA; the complex is formed during the late schizont stage and in merozoites. MyoA, MTIP and GAP45 probably form an initial complex in the cytoplasm which is then recruited to the outer face of the inner membrane complex via the interaction with GAP50. Interacts with GAP45; the interaction is independent of GAP45 phosphorylation status and can also occur independently of the formation of the glideosome complex. Interacts with human factor H isoform CFH (via sushi 6-7 domains) and isoform FHL-1 (via sushi 6-7 domains); the interaction occurs in the vector mosquito midgut at the surface of activated gametocytes; the interaction protects the parasite from alternative complement pathway-mediated elimination. A metal cation is required as a cofactor. The N-terminus signal is likely to be cleaved.

The protein localises to the inner membrane complex. It is found in the cell membrane. Its subcellular location is the endoplasmic reticulum membrane. It carries out the reaction a phosphate monoester + H2O = an alcohol + phosphate. Activity is independent of metal ions. Its function is as follows. Component of the glideosome complex, an inner membrane complex structure involved in parasite gliding motility and host cell invasion. During the asexual blood stage, may play a role in the assembly and anchoring of the glideosome complex to the inner membrane complex. During the sexual stage in the vector mosquito midgut, protects gametocytes against host alternative complement pathway-mediated elimination by interacting with host complement inhibitor factor H. Has phosphatase activity towards nucleotides such as ATP, vitamins B1 and B6, phosphorylated sugars, glycerol phosphates and inositol triphosphates. However, the phosphatase activity is controversial. The polypeptide is Glideosome-associated protein 50 (Plasmodium falciparum (isolate 3D7)).